We begin with the raw amino-acid sequence, 173 residues long: MILSGKEILKHIGEDIVIEPFSEERINPNSYNLTLFNELLVYKNETLDMKIPNETEKLIIPEEGLLLEPGKLYLGRTNEFTQTNKYVPMLEGRSSTGRLGLFIHVTAGFGDIGFAGYWTLEIFCVQPIKIYPNTEICQIYYHNIDGEYDLYNSGKYQNNNGIQPSLMYKDFEK.

DCTP-binding positions include 93–98, Asp-111, 119–121, Gln-138, and Tyr-151; these read RSSTGR and TLE. Catalysis depends on Glu-121, which acts as the Proton donor/acceptor.

The protein belongs to the dCTP deaminase family. As to quaternary structure, homotrimer.

It catalyses the reaction dCTP + 2 H2O = dUMP + NH4(+) + diphosphate. It functions in the pathway pyrimidine metabolism; dUMP biosynthesis; dUMP from dCTP: step 1/1. Functionally, bifunctional enzyme that catalyzes both the deamination of dCTP to dUTP and the hydrolysis of dUTP to dUMP without releasing the toxic dUTP intermediate. The sequence is that of dCTP deaminase, dUMP-forming from Clostridium botulinum (strain Eklund 17B / Type B).